The following is a 92-amino-acid chain: MALEEKERIIIPDENGDEHLFEVLFTFDVDETEQSYIAVVPAEQAEEEEVEVYAFRFEEQENEDFTLFPIESDDEWQMVEEMLNTLAEEEEA.

Belongs to the UPF0473 family.

This Oceanobacillus iheyensis (strain DSM 14371 / CIP 107618 / JCM 11309 / KCTC 3954 / HTE831) protein is UPF0473 protein OB2006.